The following is a 269-amino-acid chain: 5'-nucleotidase SurE (269 aa).

Aspartate 8, aspartate 9, serine 40, and asparagine 95 together coordinate a divalent metal cation.

Belongs to the SurE nucleotidase family. The cofactor is a divalent metal cation.

The protein resides in the cytoplasm. It catalyses the reaction a ribonucleoside 5'-phosphate + H2O = a ribonucleoside + phosphate. Its function is as follows. Nucleotidase that shows phosphatase activity on nucleoside 5'-monophosphates. The protein is 5'-nucleotidase SurE of Nitratidesulfovibrio vulgaris (strain DSM 19637 / Miyazaki F) (Desulfovibrio vulgaris).